Consider the following 766-residue polypeptide: Pumilio domain-containing protein 12 (766 aa).

Disordered regions lie at residues 63–98 (KKSSSTSVFDNDGTRDSLCSESSFGSQPAPKKKSKK) and 152–197 (AQEE…GDES). Residues 79–88 (SLCSESSFGS) are compositionally biased toward polar residues. Positions 179 to 193 (PADDENLESVDEQAG) are enriched in acidic residues. The 358-residue stretch at 245-602 (ARAQKCKELW…LYAGITENLY (358 aa)) folds into the PUM-HD domain. Pumilio repeat units lie at residues 313–348 (ELTPEIVRMSKNVYSKFFVKKMLKNGTKEQRDIIIN), 461–496 (SLKDKIPEFIHTPDGAKLAIKLIWFAPVKERKLIVK), 497–534 (NFKDLSVKAAMEHYGHRVLLALFDTVDDTVLLNKVIVS), and 535–571 (ELANEMKKLIEDDWGEKVIHYLVHPRDGRGIDKREIT).

The chain is Pumilio domain-containing protein 12 (puf-12) from Caenorhabditis elegans.